The chain runs to 326 residues: Thrombopoietin (326 aa).

Residues 1–21 (MELTDLLLVAILLLTARLTLS) form the signal peptide. Intrachain disulfides connect C28–C172 and C50–C106. Residues N197, N206, N235, N249, and N256 are each glycosylated (N-linked (GlcNAc...) asparagine). The interval 307–326 (FPPSPTFPTPGSPPQLPPVS) is disordered. Positions 308-326 (PPSPTFPTPGSPPQLPPVS) are enriched in pro residues.

Belongs to the EPO/TPO family.

It localises to the secreted. In terms of biological role, lineage-specific cytokine affecting the proliferation and maturation of megakaryocytes from their committed progenitor cells. It acts at a late stage of megakaryocyte development. It may be the major physiological regulator of circulating platelets. In Rattus norvegicus (Rat), this protein is Thrombopoietin (Thpo).